The primary structure comprises 52 residues: Rubredoxin (52 aa).

One can recognise a Rubredoxin-like domain in the interval 1–52 (MEKWQCTVCGYIYDPEVGDPTQNIPPGTKFEDLPDDWVCPDCGVGKDQFEKI). The Fe cation site is built by cysteine 6, cysteine 9, cysteine 39, and cysteine 42.

The protein belongs to the rubredoxin family. The cofactor is Fe(3+).

Functionally, rubredoxin is a small nonheme, iron protein lacking acid-labile sulfide. Its single Fe, chelated to 4 Cys, functions as an electron acceptor and may also stabilize the conformation of the molecule. In Thermoanaerobacterium thermosaccharolyticum (strain ATCC 7956 / DSM 571 / NCIMB 9385 / NCA 3814 / NCTC 13789 / WDCM 00135 / 2032) (Clostridium thermosaccharolyticum), this protein is Rubredoxin.